The chain runs to 315 residues: Ribonuclease Z (315 aa).

Residues His-61, His-63, Asp-65, His-66, His-151, Asp-219, and His-278 each contribute to the Zn(2+) site. The active-site Proton acceptor is the Asp-65.

Belongs to the RNase Z family. In terms of assembly, homodimer. Requires Zn(2+) as cofactor.

It carries out the reaction Endonucleolytic cleavage of RNA, removing extra 3' nucleotides from tRNA precursor, generating 3' termini of tRNAs. A 3'-hydroxy group is left at the tRNA terminus and a 5'-phosphoryl group is left at the trailer molecule.. In terms of biological role, zinc phosphodiesterase, which displays some tRNA 3'-processing endonuclease activity. Probably involved in tRNA maturation, by removing a 3'-trailer from precursor tRNA. In Clostridium botulinum (strain Alaska E43 / Type E3), this protein is Ribonuclease Z.